We begin with the raw amino-acid sequence, 226 residues long: Phosphoglycolate phosphatase (226 aa).

Catalysis depends on Asp9, which acts as the Nucleophile. The Mg(2+) site is built by Asp9 and Asp11. Residue Lys150 coordinates substrate. The Mg(2+) site is built by Asp173 and Asp177.

Belongs to the archaeal SPP-like hydrolase family. It depends on Mg(2+) as a cofactor.

It carries out the reaction 2-phosphoglycolate + H2O = glycolate + phosphate. In terms of biological role, catalyzes the dephosphorylation of 2-phosphoglycolate. This chain is Phosphoglycolate phosphatase, found in Methanosarcina acetivorans (strain ATCC 35395 / DSM 2834 / JCM 12185 / C2A).